Here is a 344-residue protein sequence, read N- to C-terminus: Heat-inducible transcription repressor HrcA (344 aa).

This sequence belongs to the HrcA family.

Functionally, negative regulator of class I heat shock genes (grpE-dnaK-dnaJ and groELS operons). Prevents heat-shock induction of these operons. In Streptococcus pneumoniae (strain 70585), this protein is Heat-inducible transcription repressor HrcA.